The primary structure comprises 243 residues: 2-C-methyl-D-erythritol 4-phosphate cytidylyltransferase (243 aa).

This sequence belongs to the IspD/TarI cytidylyltransferase family. IspD subfamily.

It carries out the reaction 2-C-methyl-D-erythritol 4-phosphate + CTP + H(+) = 4-CDP-2-C-methyl-D-erythritol + diphosphate. The protein operates within isoprenoid biosynthesis; isopentenyl diphosphate biosynthesis via DXP pathway; isopentenyl diphosphate from 1-deoxy-D-xylulose 5-phosphate: step 2/6. Its function is as follows. Catalyzes the formation of 4-diphosphocytidyl-2-C-methyl-D-erythritol from CTP and 2-C-methyl-D-erythritol 4-phosphate (MEP). The chain is 2-C-methyl-D-erythritol 4-phosphate cytidylyltransferase from Pelodictyon phaeoclathratiforme (strain DSM 5477 / BU-1).